Reading from the N-terminus, the 390-residue chain is Protein YghO (390 aa).

The chain is Protein YghO (yghO) from Escherichia coli (strain K12).